The sequence spans 374 residues: uncharacterized protein (374 aa).

29–36 (GSLNSGKS) is an ATP binding site.

Belongs to the archaeal ATPase family.

This is an uncharacterized protein from Methanocaldococcus jannaschii (strain ATCC 43067 / DSM 2661 / JAL-1 / JCM 10045 / NBRC 100440) (Methanococcus jannaschii).